The sequence spans 452 residues: MNHLVLGYVGLVIGVIVTKKSMVWRVGQVGSVLLMLPATVLVNMNMTISNVSYMMTSDFVSLGLTVLSIWLLPLMLLASQQHMVSESLIYQRVFVGCQVFLTGALVLAFMASDLLLFYIAFESTLLPTLMLITRWGAQKERYQAGTYFMFFTLVGSLPLLICLIGQYQMVGSLALDLSYEGVFQLSYLVNFWWVGCILAFLVKLPLYGVHLWLPKAHVEAPIAGSMVLAGVLLKLGGYGMMRVSLMWGATAMLSSEVFLALALWGIVVMGGICLRQTDLKSLIAYSSVGHMALVVGGVLTGVAWGYNGAMVLMIAHGLVSSCLFCLANLWYERSSTRNLSGSRGLIMIFPLISLGWFLMSLMNMALPPAINLFGELVAMVALYNWSPYSIVYMSLGAVLTAAYSLYLFGMSQWGNTMKNYKNLYTITSREYLLTTLHLVPAIYLIFYLGLMF.

A run of 14 helical transmembrane segments spans residues 4–24 (LVLGYVGLVIGVIVTKKSMVW), 29–49 (VGSVLLMLPATVLVNMNMTIS), 59–79 (FVSLGLTVLSIWLLPLMLLAS), 88–110 (LIYQRVFVGCQVFLTGALVLAFM), 114–136 (LLLFYIAFESTLLPTLMLITRWG), 144–164 (AGTYFMFFTLVGSLPLLICLI), 182–202 (VFQLSYLVNFWWVGCILAFLV), 221–241 (PIAGSMVLAGVLLKLGGYGMM), 252–272 (MLSSEVFLALALWGIVVMGGI), 282–304 (LIAYSSVGHMALVVGGVLTGVAW), 309–331 (AMVLMIAHGLVSSCLFCLANLWY), 345–365 (LIMIFPLISLGWFLMSLMNMA), 390–410 (IVYMSLGAVLTAAYSLYLFGM), and 432–452 (LLTTLHLVPAIYLIFYLGLMF).

Belongs to the complex I subunit 4 family.

The protein resides in the mitochondrion membrane. It catalyses the reaction a ubiquinone + NADH + 5 H(+)(in) = a ubiquinol + NAD(+) + 4 H(+)(out). Core subunit of the mitochondrial membrane respiratory chain NADH dehydrogenase (Complex I) that is believed to belong to the minimal assembly required for catalysis. Complex I functions in the transfer of electrons from NADH to the respiratory chain. The immediate electron acceptor for the enzyme is believed to be ubiquinone. The polypeptide is NADH-ubiquinone oxidoreductase chain 4 (ND4) (Branchiostoma lanceolatum (Common lancelet)).